The following is a 328-amino-acid chain: DNA-directed RNA polymerase subunit alpha (328 aa).

The interval 1–231 is alpha N-terminal domain (alpha-NTD); it reads MIYQMQMPER…EHVSLFANFS (231 aa). The tract at residues 252–328 is alpha C-terminal domain (alpha-CTD); sequence MRKLLQTRIE…MDITKYQMKS (77 aa).

The protein belongs to the RNA polymerase alpha chain family. As to quaternary structure, homodimer. The RNAP catalytic core consists of 2 alpha, 1 beta, 1 beta' and 1 omega subunit. When a sigma factor is associated with the core the holoenzyme is formed, which can initiate transcription.

It catalyses the reaction RNA(n) + a ribonucleoside 5'-triphosphate = RNA(n+1) + diphosphate. Its function is as follows. DNA-dependent RNA polymerase catalyzes the transcription of DNA into RNA using the four ribonucleoside triphosphates as substrates. In Prosthecochloris aestuarii (strain DSM 271 / SK 413), this protein is DNA-directed RNA polymerase subunit alpha.